The following is a 441-amino-acid chain: Xaa-Pro aminopeptidase (441 aa).

5 residues coordinate Mn(2+): Asp-261, Asp-272, His-355, Glu-384, and Glu-407.

Belongs to the peptidase M24B family. As to quaternary structure, homotetramer. The cofactor is Mn(2+).

It localises to the cytoplasm. It carries out the reaction Release of any N-terminal amino acid, including proline, that is linked to proline, even from a dipeptide or tripeptide.. In Escherichia coli (strain K12), this protein is Xaa-Pro aminopeptidase (pepP).